We begin with the raw amino-acid sequence, 410 residues long: Chorismate synthase (410 aa).

NADP(+) contacts are provided by R40 and R46. Residues 129 to 131 (RSS), 257 to 258 (QA), G302, 317 to 321 (KPISS), and R343 each bind FMN.

Belongs to the chorismate synthase family. As to quaternary structure, homotetramer. Requires FMNH2 as cofactor.

It catalyses the reaction 5-O-(1-carboxyvinyl)-3-phosphoshikimate = chorismate + phosphate. Its pathway is metabolic intermediate biosynthesis; chorismate biosynthesis; chorismate from D-erythrose 4-phosphate and phosphoenolpyruvate: step 7/7. In terms of biological role, catalyzes the anti-1,4-elimination of the C-3 phosphate and the C-6 proR hydrogen from 5-enolpyruvylshikimate-3-phosphate (EPSP) to yield chorismate, which is the branch point compound that serves as the starting substrate for the three terminal pathways of aromatic amino acid biosynthesis. This reaction introduces a second double bond into the aromatic ring system. This Chlorobaculum parvum (strain DSM 263 / NCIMB 8327) (Chlorobium vibrioforme subsp. thiosulfatophilum) protein is Chorismate synthase.